We begin with the raw amino-acid sequence, 386 residues long: Succinyl-diaminopimelate desuccinylase (386 aa).

His-75 contacts Zn(2+). Asp-77 is an active-site residue. Asp-108 contributes to the Zn(2+) binding site. Glu-138 serves as the catalytic Proton acceptor. 3 residues coordinate Zn(2+): Glu-139, Glu-167, and His-356.

Belongs to the peptidase M20A family. DapE subfamily. As to quaternary structure, homodimer. Requires Zn(2+) as cofactor. The cofactor is Co(2+).

It carries out the reaction N-succinyl-(2S,6S)-2,6-diaminopimelate + H2O = (2S,6S)-2,6-diaminopimelate + succinate. It participates in amino-acid biosynthesis; L-lysine biosynthesis via DAP pathway; LL-2,6-diaminopimelate from (S)-tetrahydrodipicolinate (succinylase route): step 3/3. Catalyzes the hydrolysis of N-succinyl-L,L-diaminopimelic acid (SDAP), forming succinate and LL-2,6-diaminopimelate (DAP), an intermediate involved in the bacterial biosynthesis of lysine and meso-diaminopimelic acid, an essential component of bacterial cell walls. The chain is Succinyl-diaminopimelate desuccinylase from Caulobacter vibrioides (strain ATCC 19089 / CIP 103742 / CB 15) (Caulobacter crescentus).